The primary structure comprises 620 residues: 1-deoxy-D-xylulose-5-phosphate synthase (620 aa).

Thiamine diphosphate-binding positions include H75 and 116–118 (AHS). D147 contacts Mg(2+). Thiamine diphosphate contacts are provided by residues 148–149 (GA), N177, Y284, and E366. N177 contributes to the Mg(2+) binding site.

The protein belongs to the transketolase family. DXPS subfamily. As to quaternary structure, homodimer. The cofactor is Mg(2+). Requires thiamine diphosphate as cofactor.

It catalyses the reaction D-glyceraldehyde 3-phosphate + pyruvate + H(+) = 1-deoxy-D-xylulose 5-phosphate + CO2. Its pathway is metabolic intermediate biosynthesis; 1-deoxy-D-xylulose 5-phosphate biosynthesis; 1-deoxy-D-xylulose 5-phosphate from D-glyceraldehyde 3-phosphate and pyruvate: step 1/1. In terms of biological role, catalyzes the acyloin condensation reaction between C atoms 2 and 3 of pyruvate and glyceraldehyde 3-phosphate to yield 1-deoxy-D-xylulose-5-phosphate (DXP). The sequence is that of 1-deoxy-D-xylulose-5-phosphate synthase from Bordetella bronchiseptica (strain ATCC BAA-588 / NCTC 13252 / RB50) (Alcaligenes bronchisepticus).